Consider the following 346-residue polypeptide: Fe(3+) ions import ATP-binding protein FbpC 2 (346 aa).

In terms of domain architecture, ABC transporter spans 2–234 (LELHRVSKSF…PNSEDIATFL (233 aa)). Residue 34 to 41 (GPSGSGKT) participates in ATP binding.

Belongs to the ABC transporter superfamily. Fe(3+) ion importer (TC 3.A.1.10) family. The complex is composed of two ATP-binding proteins (FbpC), two transmembrane proteins (FbpB) and a solute-binding protein (FbpA).

It is found in the cell inner membrane. It carries out the reaction Fe(3+)(out) + ATP + H2O = Fe(3+)(in) + ADP + phosphate + H(+). Part of the ABC transporter complex FbpABC involved in Fe(3+) ions import. Responsible for energy coupling to the transport system. In Pectobacterium atrosepticum (strain SCRI 1043 / ATCC BAA-672) (Erwinia carotovora subsp. atroseptica), this protein is Fe(3+) ions import ATP-binding protein FbpC 2.